Reading from the N-terminus, the 254-residue chain is 3-deoxy-manno-octulosonate cytidylyltransferase (254 aa).

It belongs to the KdsB family.

Its subcellular location is the cytoplasm. It catalyses the reaction 3-deoxy-alpha-D-manno-oct-2-ulosonate + CTP = CMP-3-deoxy-beta-D-manno-octulosonate + diphosphate. It participates in nucleotide-sugar biosynthesis; CMP-3-deoxy-D-manno-octulosonate biosynthesis; CMP-3-deoxy-D-manno-octulosonate from 3-deoxy-D-manno-octulosonate and CTP: step 1/1. Its pathway is bacterial outer membrane biogenesis; lipopolysaccharide biosynthesis. Functionally, activates KDO (a required 8-carbon sugar) for incorporation into bacterial lipopolysaccharide in Gram-negative bacteria. The chain is 3-deoxy-manno-octulosonate cytidylyltransferase from Pseudomonas syringae pv. tomato (strain ATCC BAA-871 / DC3000).